The primary structure comprises 790 residues: Nuclear cap-binding protein subunit 1 (790 aa).

A disordered region spans residues 1 to 26; the sequence is MSRRRHSYENDGGQPHKRRKTSDANE. Residues 3–20 carry the Nuclear localization signal motif; it reads RRRHSYENDGGQPHKRRK. Ser-7 is modified (phosphoserine). At Thr-21 the chain carries Phosphothreonine. Ser-22 and Ser-201 each carry phosphoserine. Residues 28–240 enclose the MIF4G domain; it reads EDHLESLICK…CLWAQIQKLK (213 aa). Lys-204 is modified (N6-acetyllysine). The stretch at 643 to 713 forms a coiled coil; that stretch reads STIRKMNKHV…SEQKNLFLVI (71 aa). The disordered stretch occupies residues 666–685; sequence LARQHKRRSDDDDRSSDRKD. Residue Lys-684 forms a Glycyl lysine isopeptide (Lys-Gly) (interchain with G-Cter in SUMO2) linkage. Lys-698 bears the N6-acetyllysine mark.

It belongs to the NCBP1 family. Component of the nuclear cap-binding complex (CBC), a heterodimer composed of NCBP1/CBP80 and NCBP2/CBP20 that interacts with m7GpppG-capped RNA. Found in a U snRNA export complex containing PHAX/RNUXA, NCBP1/CBP80, NCBP2/CBP20, RAN, XPO1 and m7G-capped RNA. Identified in a IGF2BP1-dependent mRNP granule complex containing untranslated mRNAs. Interacts with PHAX/RNUXA, SRRT/ARS2, EIF4G2, IGF2BP1, HNRNPF, HNRNPH1, KIAA0427/CTIF, PARN, DROSHA, UPF1 and ALYREF/THOC4. May interact with EIF4G1; the interaction is however controversial. The large PER complex involved in the repression of transcriptional termination is composed of at least PER2, CDK9, DDX5, DHX9, NCBP1/CBP80 and POLR2A (active). Component of an alternative nuclear cap-binding complex (CBC) composed of NCBP1/CBP80 and NCBP3. Interacts with METTL3. Interacts with ZFC3H1 in a RNase-insensitive manner. Interacts with MTREX. Interacts with TASOR. Interacts with DHX34; the interaction is RNA-dependent. Interacts with KPNA3. Dephosphorylated at Thr-21 by the PNUTS-PP1 complex during RNA polymerase II transcription pause-release. Expressed in the spermatogonia, spermatocytes and granular cells within the cerebellum.

It localises to the nucleus. It is found in the cytoplasm. In terms of biological role, component of the cap-binding complex (CBC), which binds cotranscriptionally to the 5'-cap of pre-mRNAs and is involved in various processes such as pre-mRNA splicing, translation regulation, nonsense-mediated mRNA decay, RNA-mediated gene silencing (RNAi) by microRNAs (miRNAs) and mRNA export. The CBC complex is involved in mRNA export from the nucleus via its interaction with ALYREF/THOC4/ALY, leading to the recruitment of the mRNA export machinery to the 5'-end of mRNA and to mRNA export in a 5' to 3' direction through the nuclear pore. The CBC complex is also involved in mediating U snRNA and intronless mRNAs export from the nucleus. The CBC complex is essential for a pioneer round of mRNA translation, before steady state translation when the CBC complex is replaced by cytoplasmic cap-binding protein eIF4E. The pioneer round of mRNA translation mediated by the CBC complex plays a central role in nonsense-mediated mRNA decay (NMD), NMD only taking place in mRNAs bound to the CBC complex, but not on eIF4E-bound mRNAs. The CBC complex enhances NMD in mRNAs containing at least one exon-junction complex (EJC) via its interaction with UPF1, promoting the interaction between UPF1 and UPF2. The CBC complex is also involved in 'failsafe' NMD, which is independent of the EJC complex, while it does not participate in Staufen-mediated mRNA decay (SMD). During cell proliferation, the CBC complex is also involved in microRNAs (miRNAs) biogenesis via its interaction with SRRT/ARS2 and is required for miRNA-mediated RNA interference. The CBC complex also acts as a negative regulator of PARN, thereby acting as an inhibitor of mRNA deadenylation. In the CBC complex, NCBP1/CBP80 does not bind directly capped RNAs (m7GpppG-capped RNA) but is required to stabilize the movement of the N-terminal loop of NCBP2/CBP20 and lock the CBC into a high affinity cap-binding state with the cap structure. Associates with NCBP3 to form an alternative cap-binding complex (CBC) which plays a key role in mRNA export and is particularly important in cellular stress situations such as virus infections. The conventional CBC with NCBP2 binds both small nuclear RNA (snRNA) and messenger (mRNA) and is involved in their export from the nucleus whereas the alternative CBC with NCBP3 does not bind snRNA and associates only with mRNA thereby playing a role only in mRNA export. NCBP1/CBP80 is required for cell growth and viability. The chain is Nuclear cap-binding protein subunit 1 (Ncbp1) from Mus musculus (Mouse).